The sequence spans 1073 residues: uncharacterized protein (1073 aa).

An N-terminal signal peptide occupies residues 1-36; the sequence is MAEIIHHSNVFTWAFHVSEYDGAPLLLLGSFSSVAS. An N-linked (GlcNAc...) asparagine glycan is attached at Asn132. 392–399 provides a ligand contact to ATP; that stretch reads ATAGIGKS. N-linked (GlcNAc...) asparagine glycosylation is found at Asn544, Asn632, Asn703, Asn732, and Asn953.

This is an uncharacterized protein from Schizosaccharomyces pombe (strain 972 / ATCC 24843) (Fission yeast).